Reading from the N-terminus, the 521-residue chain is Protein nucleotidyltransferase YdiU (521 aa).

Residues Gly109, Gly111, Arg112, Lys131, Asp143, Gly144, Arg194, and Arg201 each contribute to the ATP site. Asp270 functions as the Proton acceptor in the catalytic mechanism. Mg(2+) contacts are provided by Asn271 and Asp280. Residue Asp280 participates in ATP binding.

It belongs to the SELO family. Mg(2+) is required as a cofactor. The cofactor is Mn(2+).

It catalyses the reaction L-seryl-[protein] + ATP = 3-O-(5'-adenylyl)-L-seryl-[protein] + diphosphate. It carries out the reaction L-threonyl-[protein] + ATP = 3-O-(5'-adenylyl)-L-threonyl-[protein] + diphosphate. The catalysed reaction is L-tyrosyl-[protein] + ATP = O-(5'-adenylyl)-L-tyrosyl-[protein] + diphosphate. The enzyme catalyses L-histidyl-[protein] + UTP = N(tele)-(5'-uridylyl)-L-histidyl-[protein] + diphosphate. It catalyses the reaction L-seryl-[protein] + UTP = O-(5'-uridylyl)-L-seryl-[protein] + diphosphate. It carries out the reaction L-tyrosyl-[protein] + UTP = O-(5'-uridylyl)-L-tyrosyl-[protein] + diphosphate. Functionally, nucleotidyltransferase involved in the post-translational modification of proteins. It can catalyze the addition of adenosine monophosphate (AMP) or uridine monophosphate (UMP) to a protein, resulting in modifications known as AMPylation and UMPylation. This is Protein nucleotidyltransferase YdiU from Burkholderia pseudomallei (strain 1106a).